The following is a 301-amino-acid chain: MTLEREAAANTAKVLSEALPYIRRYVGKTLVIKYGGNAMESDELKTGFARDIVLMKAVGINPVVVHGGGPQIGDLLKRLSIESHFIDGMRVTDAQTMDVVEMVLGGQVNKDIVNLINRHGGSAIGLTGKDAELIRAKKLTVTRQTPEMTQPEIIDIGQVGEVIGINTDLLNLLVKGDFIPVIAPIGVGANGESYNINADLVAGKVAEALKAEKLMLLTNIAGLMDKEGKVLTGLTTQQVDELIADGTIYGGMLPKIRCALEAVQGGVGSSLILDGRVPNAILLEIFTDTGVGTLISNRKRP.

Substrate is bound by residues 68-69, arginine 90, and asparagine 195; that span reads GG.

It belongs to the acetylglutamate kinase family. ArgB subfamily.

It localises to the cytoplasm. It catalyses the reaction N-acetyl-L-glutamate + ATP = N-acetyl-L-glutamyl 5-phosphate + ADP. The protein operates within amino-acid biosynthesis; L-arginine biosynthesis; N(2)-acetyl-L-ornithine from L-glutamate: step 2/4. Its function is as follows. Catalyzes the ATP-dependent phosphorylation of N-acetyl-L-glutamate. This chain is Acetylglutamate kinase, found in Pseudomonas fluorescens (strain SBW25).